The primary structure comprises 371 residues: MQQKCYYEILNVSKTASGVEIKRAYRKLAMEYHPDRNPGDKEAEIKFKEISEAYEILSDDSKRSRYDQFGHAGVNQQSGFGGTGGFEDIFDTFFGGGTSRGSNRSRASRGSDLEYTLEITLEEAFFGVEKEITIPRMESCDSCDGTGSKSRSKTTCHACHGQGTIRRQQGFFAFEQTCPVCNGTGYSITDPCDACYGNGKVKKQKTLKVKIPEGVDNGDRIRLQGEGDSGSNGAMNGDLYVQIIIKEHKIFERRDINLYCEMPISFTKACIGGDIKVPTLDGEVVLKVVPETQTGKVFRLREKGMKSLRGHRRGDLLCKVVVETPVNLSAEQKELLEKFADSLGEDYQSKHAPKSKTWFDNVKDYAKKFFE.

The J domain maps to 5–70 (CYYEILNVSK…SKRSRYDQFG (66 aa)). Residues 127 to 204 (GVEKEITIPR…CYGNGKVKKQ (78 aa)) form a CR-type zinc finger. The Zn(2+) site is built by cysteine 140, cysteine 143, cysteine 156, cysteine 159, cysteine 178, cysteine 181, cysteine 192, and cysteine 195. CXXCXGXG motif repeat units follow at residues 140 to 147 (CDSCDGTG), 156 to 163 (CHACHGQG), 178 to 185 (CPVCNGTG), and 192 to 199 (CDACYGNG).

This sequence belongs to the DnaJ family. In terms of assembly, homodimer. Zn(2+) serves as cofactor.

Its subcellular location is the cytoplasm. In terms of biological role, participates actively in the response to hyperosmotic and heat shock by preventing the aggregation of stress-denatured proteins and by disaggregating proteins, also in an autonomous, DnaK-independent fashion. Unfolded proteins bind initially to DnaJ; upon interaction with the DnaJ-bound protein, DnaK hydrolyzes its bound ATP, resulting in the formation of a stable complex. GrpE releases ADP from DnaK; ATP binding to DnaK triggers the release of the substrate protein, thus completing the reaction cycle. Several rounds of ATP-dependent interactions between DnaJ, DnaK and GrpE are required for fully efficient folding. Also involved, together with DnaK and GrpE, in the DNA replication of plasmids through activation of initiation proteins. In Francisella tularensis subsp. tularensis (strain WY96-3418), this protein is Chaperone protein DnaJ.